Here is a 339-residue protein sequence, read N- to C-terminus: Anthranilate phosphoribosyltransferase (339 aa).

5-phospho-alpha-D-ribose 1-diphosphate-binding positions include glycine 82, 85-86 (GD), 92-95 (NIST), 110-118 (KHGNSSISS), and serine 122. Anthranilate is bound at residue glycine 82. Serine 94 serves as a coordination point for Mg(2+). Anthranilate is bound at residue asparagine 113. Arginine 168 contacts anthranilate. Mg(2+) contacts are provided by aspartate 227 and glutamate 228.

Belongs to the anthranilate phosphoribosyltransferase family. Homodimer. It depends on Mg(2+) as a cofactor.

It carries out the reaction N-(5-phospho-beta-D-ribosyl)anthranilate + diphosphate = 5-phospho-alpha-D-ribose 1-diphosphate + anthranilate. It participates in amino-acid biosynthesis; L-tryptophan biosynthesis; L-tryptophan from chorismate: step 2/5. Catalyzes the transfer of the phosphoribosyl group of 5-phosphorylribose-1-pyrophosphate (PRPP) to anthranilate to yield N-(5'-phosphoribosyl)-anthranilate (PRA). This chain is Anthranilate phosphoribosyltransferase, found in Ruthia magnifica subsp. Calyptogena magnifica.